The chain runs to 540 residues: Putative serine protease F56F10.1 (540 aa).

Positions 1–16 (MLRNLLLLLLPLLIEA) are cleaved as a signal peptide. 2 N-linked (GlcNAc...) asparagine glycosylation sites follow: asparagine 58 and asparagine 87. Serine 182 functions as the Charge relay system in the catalytic mechanism. N-linked (GlcNAc...) asparagine glycosylation is found at asparagine 270, asparagine 300, asparagine 317, asparagine 343, asparagine 441, and asparagine 449. Aspartate 453 serves as the catalytic Charge relay system. Asparagine 475 carries an N-linked (GlcNAc...) asparagine glycan. The active-site Charge relay system is the histidine 479.

This sequence belongs to the peptidase S28 family.

This chain is Putative serine protease F56F10.1, found in Caenorhabditis elegans.